The following is a 581-amino-acid chain: uncharacterized protein (581 aa).

This is an uncharacterized protein from Acanthamoeba polyphaga mimivirus (APMV).